The sequence spans 525 residues: Cytochrome P450 4V2 (525 aa).

Residues 13–33 traverse the membrane as a helical segment; the sequence is LLLWGAASALSLAGASLVLSL. 2 residues coordinate heme: glutamate 329 and cysteine 467.

Belongs to the cytochrome P450 family. The cofactor is heme. As to expression, broadly expressed. Detected in heart, brain, placenta, lung, liver, skeletal muscle, kidney, pancreas, retina, retinal pigment epithelium (RPE) and lymphocytes.

The protein localises to the endoplasmic reticulum membrane. The catalysed reaction is dodecanoate + reduced [NADPH--hemoprotein reductase] + O2 = 12-hydroxydodecanoate + oxidized [NADPH--hemoprotein reductase] + H2O + H(+). The enzyme catalyses tetradecanoate + reduced [NADPH--hemoprotein reductase] + O2 = 14-hydroxytetradecanoate + oxidized [NADPH--hemoprotein reductase] + H2O + H(+). It carries out the reaction hexadecanoate + reduced [NADPH--hemoprotein reductase] + O2 = 16-hydroxyhexadecanoate + oxidized [NADPH--hemoprotein reductase] + H2O + H(+). It catalyses the reaction (5Z,8Z,11Z,14Z,17Z)-eicosapentaenoate + reduced [NADPH--hemoprotein reductase] + O2 = 20-hydroxy-(5Z,8Z,11Z,14Z,17Z)-eicosapentaenoate + oxidized [NADPH--hemoprotein reductase] + H2O + H(+). The catalysed reaction is (4Z,7Z,10Z,13Z,16Z,19Z)-docosahexaenoate + reduced [NADPH--hemoprotein reductase] + O2 = 22-hydroxy-(4Z,7Z,10Z,13Z,16Z,19Z)-docosahexaenoate + oxidized [NADPH--hemoprotein reductase] + H2O + H(+). It participates in lipid metabolism; fatty acid metabolism. Inhibited by N-hydroxy-N'-(4-n-butyl-2-methylphenyl formamidine)(HET0016) with an IC(50) of 38 nM. Its function is as follows. A cytochrome P450 monooxygenase involved in fatty acid metabolism in the eye. Catalyzes the omega-hydroxylation of polyunsaturated fatty acids (PUFAs) docosahexaenoate (DHA) and its precursor eicosapentaenoate (EPA), and may contribute to the homeostasis of these retinal PUFAs. Omega hydroxylates saturated fatty acids such as laurate, myristate and palmitate, the catalytic efficiency decreasing in the following order: myristate &gt; laurate &gt; palmitate (C14&gt;C12&gt;C16). Mechanistically, uses molecular oxygen inserting one oxygen atom into a substrate, and reducing the second into a water molecule, with two electrons provided by NADPH via cytochrome P450 reductase (CPR; NADPH-ferrihemoprotein reductase). The chain is Cytochrome P450 4V2 (CYP4V2) from Homo sapiens (Human).